The following is an 83-amino-acid chain: Small proline-rich protein 2A3 (83 aa).

5 consecutive repeat copies span residues 21-29 (PKCPEPCPP), 30-38 (QVWPGPCRP), 39-47 (VMCFEPCLP), 48-56 (SVWPGPCRP), and 57-65 (VVCYEQCPP). The segment at 21-65 (PKCPEPCPPQVWPGPCRPVMCFEPCLPSVWPGPCRPVVCYEQCPP) is 5 X 9 AA approximate tandem repeats.

This sequence belongs to the cornifin (SPRR) family. Post-translationally, forms five pairs of intrachain disulfide bonds.

It localises to the secreted. The protein localises to the extracellular space. Its subcellular location is the cytoplasmic vesicle. It is found in the secretory vesicle. In terms of biological role, gut bactericidal protein that selectively kills Gram-positive bacteria by binding to negatively charged lipids on bacterial membranes, leading to bacterial membrane permeabilization and disruption. Specifically binds lipids bearing negatively charged headgroups, such as phosphatidic acid, phosphatidylserine (PS), cardiolipin (CL), and phosphatidylinositol phosphates, but not to zwitterionic or neutral lipids. Induced by type-2 cytokines in response to helminth infection and is required to protect against helminth-induced bacterial invasion of intestinal tissue. May also be involved in the development of the cornified envelope of squamous epithelia; however, additional evidences are required to confirm this result in vivo. This chain is Small proline-rich protein 2A3, found in Mus musculus (Mouse).